We begin with the raw amino-acid sequence, 252 residues long: 3-dehydroquinate dehydratase (252 aa).

3-dehydroquinate-binding positions include serine 21, 46–48 (EWR), and arginine 82. Histidine 143 acts as the Proton donor/acceptor in catalysis. Lysine 170 acts as the Schiff-base intermediate with substrate in catalysis. Residues arginine 213, serine 232, and glutamine 236 each coordinate 3-dehydroquinate.

This sequence belongs to the type-I 3-dehydroquinase family. Homodimer.

The enzyme catalyses 3-dehydroquinate = 3-dehydroshikimate + H2O. It participates in metabolic intermediate biosynthesis; chorismate biosynthesis; chorismate from D-erythrose 4-phosphate and phosphoenolpyruvate: step 3/7. Involved in the third step of the chorismate pathway, which leads to the biosynthesis of aromatic amino acids. Catalyzes the cis-dehydration of 3-dehydroquinate (DHQ) and introduces the first double bond of the aromatic ring to yield 3-dehydroshikimate. The polypeptide is 3-dehydroquinate dehydratase (Shigella dysenteriae).